A 285-amino-acid chain; its full sequence is Coagulation factor IX (285 aa).

Tyr23 is subject to Sulfotyrosine. Residue Asn25 is glycosylated (N-linked (GlcNAc...) asparagine). Thr27 is subject to Phosphothreonine; alternate. The O-linked (GalNAc...) threonine; alternate glycan is linked to Thr27. An N-linked (GlcNAc...) asparagine glycan is attached at Asn45. Thr47 carries an O-linked (GalNAc...) threonine glycan. The region spanning 59-285 is the Peptidase S1 domain; it reads VVGGEDAKPG…YTKVSRYVNW (227 aa). Cys84 and Cys100 are disulfide-bonded. The Charge relay system role is filled by His99. Positions 115, 120, and 123 each coordinate Ca(2+). N-linked (GlcNAc...) asparagine glycosylation is found at Asn127 and Asn138. The active-site Charge relay system is Asp147. Disulfide bonds link Cys214–Cys228 and Cys239–Cys267. Ser243 acts as the Charge relay system in catalysis.

It belongs to the peptidase S1 family. Heterodimer of a light chain and a heavy chain; disulfide-linked. Interacts (inactive and activated) with F11 (activated) in calcium-dependent manner. Interacts with SERPINC1. In terms of processing, activated by factor XIa, which excises the activation peptide. The propeptide can also be removed by snake venom protease. Activated by coagulation factor VIIa-tissue factor (F7-F3) complex in calcium-dependent manner.

Its subcellular location is the secreted. It carries out the reaction Selective cleavage of Arg-|-Ile bond in factor X to form factor Xa.. Factor IX is a vitamin K-dependent plasma protein that participates in the intrinsic pathway of blood coagulation by converting factor X to its active form in the presence of Ca(2+) ions, phospholipids, and factor VIIIa. The chain is Coagulation factor IX (F9) from Cavia porcellus (Guinea pig).